The sequence spans 1697 residues: MDEFTSDSLTTSRLLRQISHSDSLSSVGSSSNRSNSNYENKINNGIINDFDSTNANDGISNNSNNSNNNNNSSSILKIHQSPQSILSTEQQHQIQQYQQYHQQQIYESGYVPPHVYIFDPDYKSNNDEEDKEKRSLIELNKSTDLSNIKTTTTTTTTTTPPPLMIPENEEENKQLRQEILNELSKSESFTKIKEPGEIYGFCECSLLYNHLTCANLVITSNYLIFLPQQQVDSDYVLENYLYKKGDFFWKKYWFVLTPDSISWYKSSILKETHYPNGTILLSKIVTVDKLDPEETGKPFCLQIMTNTSIHLIQLDTEPQLEHWYHEINRMQKNLNVTIPIGDIVSITMESNAALFFDSLCLTLKKGENCLVTPSSSSNEVYSLLIKLWNRNRGVTVVEPEKQQRLLEFQKTFKLSQGVNLLIETPCVFYQDEEFSYEGVLYATTEGTLYFSSLDSVLIIPESDIYAITIDRKSDNRDALKVYTTDYDVLFFDSIDDIETFFNVISTSLARSNPKIFFSTVGQIPPIDEPKHDEKEHKSTYQTISSGIRSWKIPIPSLPNFSIPIPKSIPIPLFRSKSSSHLDPQNSQQQQQQQQQSSSLQLDDNNNNIVIPHTSNPTTIIPSTSSSSAIPPPPSSTSSTSSTTHEKTIIIQKNSSINSTFHDIFPLLPLDETVIMFQNCSLYYYSYDSNVEGIVYITKSYIAFNPSPLDKQQQQQQQQQQQQPNSSSITSTTYDRDLDTDSDTDSESDFDYPKQSQHDNSVVMVNNNQYKVKEVLMKKALIPIEDIVSVTKERFLLFFNQCVKIITLDHKWIFGSLNNINSFYNLILETWKQIPKTLLDSSSSSSSSSSSSLLSSSPNNNNSDLNINGNSEGSIFTPLESIKIKNKLGLPADEVLITWFNCTNFKGAQLKYGFLYISNNNICFRSKFGFQKRTIVIPLSQVIEIKKYSAFIPNGIKITTASHHEFQFASFIHRNRVYQILYETWLKANNKKSNSSNSLSSSPTITSPLAISPSIASPSITPPSSTPPSSTTPSSTTPTITSPTIHSTLPSTVVYNDIQEIIDGENNSNNNNNNNNTNNTNKSNSFIGNVEEDVDKIKRSIKSLPILKIHSAQQQQQQQPKTTTTTTSTTTTNLISPRLLTPLTITQSPGFSSLVNSPILPVKPLRITILTIGSRGDIQPFIALSLGLKEYGHNVTLATHELYRDLISKEFGLNYQPLGGDPRELMDLCVRNGIFTPKFIKEALSRFRSFIDDLLLTCWKAVQNSNTQVLIATPGCFAGPHIGEVLQIPFFNAFTMPFTRTRTYPNPFAPFASHQMGGVFNLATHVMMEKVLWQPISGQINQWRTETLKIPPWNSSVSINETYRMPYLYCFSKYLVPKPPDWSGEIAITGYWTLKNQANSDSPPDDLIQFLNEESSTENDDIPIYIGFGSIVIDNPTALSLLLIEAIKLSGKRAIISQGWGGLSIDEHNNNNNNNNNNNNGENSDSNKSSLQSNRIYLLKKPVDHSWLFEKVSLVISHGGAGTVAASLLAAKPTIVVPFFGDQFFWGERIKQTGIGTSIPFDILTAKSLSSHIISILNEPSVRAKVNKMSHLLKREDGVKTAIDFIHRYLPFSFIPPREIPFSSAPNSCMGCKQPFTLLHVMKARVHCHCCGKIFCESCTSHKCPIKKYRINTPVRVCDKCFNDLQSNPSSNSFILND.

2 disordered regions span residues 20-40 (HSDS…NYEN) and 142-166 (STDL…LMIP). The region spanning 234 to 332 (DYVLENYLYK…WYHEINRMQK (99 aa)) is the PH domain. Disordered stretches follow at residues 573–645 (FRSK…TTHE) and 707–756 (PLDK…KQSQ). Low complexity-rich tracts occupy residues 584 to 628 (QNSQ…SSSA) and 711 to 722 (QQQQQQQQQQQQ). GRAM domains follow at residues 658 to 793 (STFH…TKER) and 881 to 948 (IKIK…KKYS). Residues 739–749 (TDSDTDSESDF) are compositionally biased toward acidic residues. 4 disordered regions span residues 1011–1047 (SPSI…IHST), 1062–1085 (DGEN…SNSF), 1110–1130 (SAQQ…STTT), and 1466–1488 (EHNN…SNKS). Composition is skewed to low complexity over residues 1026–1047 (PPSS…IHST), 1065–1084 (NNSN…KSNS), 1112–1130 (QQQQ…STTT), and 1469–1479 (NNNNNNNNNNN). An FYVE-type zinc finger spans residues 1622 to 1685 (SSAPNSCMGC…VCDKCFNDLQ (64 aa)). Zn(2+) is bound by residues cysteine 1628, cysteine 1631, cysteine 1647, cysteine 1650, cysteine 1655, cysteine 1658, cysteine 1677, and cysteine 1680.

The protein belongs to the glycosyltransferase 28 family.

The catalysed reaction is a sterol + UDP-alpha-D-glucose = a sterol 3-beta-D-glucoside + UDP + H(+). Involved in the biosynthesis of sterol glucoside. Can use different sterols such as cholesterol, sitosterol, and ergosterol as sugar acceptors. The protein is UDP-sugar-dependent glycosyltransferase 52 (ugt52) of Dictyostelium discoideum (Social amoeba).